We begin with the raw amino-acid sequence, 357 residues long: Mitogen-activated protein kinase kinase SIPKK (357 aa).

The Protein kinase domain maps to 70–330; that stretch reads FEAVKVIGKG…ANELMRHPFI (261 aa). ATP is bound by residues 76–84 and Lys99; that span reads IGKGNGGIV. The active-site Proton acceptor is the Asp192.

The protein belongs to the protein kinase superfamily. STE Ser/Thr protein kinase family. MAP kinase kinase subfamily. As to quaternary structure, interacts with SIPK.

It catalyses the reaction L-tyrosyl-[protein] + ATP = O-phospho-L-tyrosyl-[protein] + ADP + H(+). It carries out the reaction L-seryl-[protein] + ATP = O-phospho-L-seryl-[protein] + ADP + H(+). The enzyme catalyses L-threonyl-[protein] + ATP = O-phospho-L-threonyl-[protein] + ADP + H(+). In terms of biological role, phosphorylates myelin basic protein (MBP) in vitro. May be involved in disease resistance. The polypeptide is Mitogen-activated protein kinase kinase SIPKK (Nicotiana tabacum (Common tobacco)).